A 225-amino-acid polypeptide reads, in one-letter code: Imidazole glycerol phosphate synthase subunit HisH (225 aa).

Residues lysine 5–glutamine 220 form the Glutamine amidotransferase type-1 domain. The active-site Nucleophile is cysteine 80. Residues histidine 195 and glutamate 197 contribute to the active site.

Heterodimer of HisH and HisF.

It is found in the cytoplasm. It catalyses the reaction 5-[(5-phospho-1-deoxy-D-ribulos-1-ylimino)methylamino]-1-(5-phospho-beta-D-ribosyl)imidazole-4-carboxamide + L-glutamine = D-erythro-1-(imidazol-4-yl)glycerol 3-phosphate + 5-amino-1-(5-phospho-beta-D-ribosyl)imidazole-4-carboxamide + L-glutamate + H(+). The enzyme catalyses L-glutamine + H2O = L-glutamate + NH4(+). It functions in the pathway amino-acid biosynthesis; L-histidine biosynthesis; L-histidine from 5-phospho-alpha-D-ribose 1-diphosphate: step 5/9. IGPS catalyzes the conversion of PRFAR and glutamine to IGP, AICAR and glutamate. The HisH subunit catalyzes the hydrolysis of glutamine to glutamate and ammonia as part of the synthesis of IGP and AICAR. The resulting ammonia molecule is channeled to the active site of HisF. In Colwellia psychrerythraea (strain 34H / ATCC BAA-681) (Vibrio psychroerythus), this protein is Imidazole glycerol phosphate synthase subunit HisH.